The primary structure comprises 236 residues: Predicted GPI-anchored protein 43 (236 aa).

An N-terminal signal peptide occupies residues 1-24; that stretch reads MHQRNHHSILLTLLLYLQSIVALA. 3 N-linked (GlcNAc...) asparagine glycosylation sites follow: Asn-192, Asn-195, and Asn-198. Gly-208 carries GPI-anchor amidated glycine lipidation. Positions 209 to 236 are cleaved as a propeptide — removed in mature form; the sequence is SVCLTSSYLNSPIIILCAILTGTLFAMY.

Its subcellular location is the cell membrane. This chain is Predicted GPI-anchored protein 43 (PGA43), found in Candida albicans (strain SC5314 / ATCC MYA-2876) (Yeast).